The following is a 480-amino-acid chain: Glutamyl-tRNA(Gln) amidotransferase subunit A (480 aa).

Catalysis depends on charge relay system residues lysine 70 and serine 145. Residue serine 169 is the Acyl-ester intermediate of the active site.

Belongs to the amidase family. GatA subfamily. As to quaternary structure, heterotrimer of A, B and C subunits.

The catalysed reaction is L-glutamyl-tRNA(Gln) + L-glutamine + ATP + H2O = L-glutaminyl-tRNA(Gln) + L-glutamate + ADP + phosphate + H(+). Allows the formation of correctly charged Gln-tRNA(Gln) through the transamidation of misacylated Glu-tRNA(Gln) in organisms which lack glutaminyl-tRNA synthetase. The reaction takes place in the presence of glutamine and ATP through an activated gamma-phospho-Glu-tRNA(Gln). The protein is Glutamyl-tRNA(Gln) amidotransferase subunit A of Lactobacillus delbrueckii subsp. bulgaricus (strain ATCC BAA-365 / Lb-18).